Reading from the N-terminus, the 196-residue chain is Small ribosomal subunit protein uS4c (196 aa).

The tract at residues 15-41 (LGALPGLTSKRPRSGSDLKNPLRSGKR) is disordered. The S4 RNA-binding domain maps to 89 to 150 (MRLDNILFRL…KQRSKALIQN (62 aa)).

This sequence belongs to the universal ribosomal protein uS4 family. Part of the 30S ribosomal subunit. Contacts protein S5. The interaction surface between S4 and S5 is involved in control of translational fidelity.

It is found in the plastid. The protein resides in the chloroplast. One of the primary rRNA binding proteins, it binds directly to 16S rRNA where it nucleates assembly of the body of the 30S subunit. In terms of biological role, with S5 and S12 plays an important role in translational accuracy. The polypeptide is Small ribosomal subunit protein uS4c (rps4) (Narcissus odorus (Campernelle jonquil)).